We begin with the raw amino-acid sequence, 195 residues long: Dynactin subunit 6 (195 aa).

It belongs to the dynactin subunits 5/6 family. Dynactin subunit 6 subfamily. Member of the pointed-end complex of the dynactin shoulder complex which contains dctn4, dctn5 and dctn6 subunits and Actr10. Within the complex dctn6 forms a heterodimer with dctn5. Interacts with plk1.

The protein localises to the cytoplasm. The protein resides in the cytoskeleton. Its subcellular location is the chromosome. It localises to the centromere. It is found in the kinetochore. Functionally, part of the dynactin complex that activates the molecular motor dynein for ultra-processive transport along microtubules. The sequence is that of Dynactin subunit 6 (dctn6) from Danio rerio (Zebrafish).